We begin with the raw amino-acid sequence, 219 residues long: 2-phospho-L-lactate guanylyltransferase (219 aa).

Belongs to the CofC family. Homodimer.

It catalyses the reaction (2S)-2-phospholactate + GTP + H(+) = (2S)-lactyl-2-diphospho-5'-guanosine + diphosphate. It functions in the pathway cofactor biosynthesis; coenzyme F420 biosynthesis. Its function is as follows. Guanylyltransferase that catalyzes the activation of (2S)-2-phospholactate (2-PL) as (2S)-lactyl-2-diphospho-5'-guanosine, via the condensation of 2-PL with GTP. It is involved in the biosynthesis of coenzyme F420, a hydride carrier cofactor. In Methanocella arvoryzae (strain DSM 22066 / NBRC 105507 / MRE50), this protein is 2-phospho-L-lactate guanylyltransferase.